Reading from the N-terminus, the 156-residue chain is ATP synthase subunit b (156 aa).

A helical membrane pass occupies residues 5–25; the sequence is VTLIGQTVAFIIFVWFCMKFV.

Belongs to the ATPase B chain family. As to quaternary structure, F-type ATPases have 2 components, F(1) - the catalytic core - and F(0) - the membrane proton channel. F(1) has five subunits: alpha(3), beta(3), gamma(1), delta(1), epsilon(1). F(0) has three main subunits: a(1), b(2) and c(10-14). The alpha and beta chains form an alternating ring which encloses part of the gamma chain. F(1) is attached to F(0) by a central stalk formed by the gamma and epsilon chains, while a peripheral stalk is formed by the delta and b chains.

It localises to the cell inner membrane. Its function is as follows. F(1)F(0) ATP synthase produces ATP from ADP in the presence of a proton or sodium gradient. F-type ATPases consist of two structural domains, F(1) containing the extramembraneous catalytic core and F(0) containing the membrane proton channel, linked together by a central stalk and a peripheral stalk. During catalysis, ATP synthesis in the catalytic domain of F(1) is coupled via a rotary mechanism of the central stalk subunits to proton translocation. In terms of biological role, component of the F(0) channel, it forms part of the peripheral stalk, linking F(1) to F(0). The sequence is that of ATP synthase subunit b from Shewanella loihica (strain ATCC BAA-1088 / PV-4).